A 273-amino-acid chain; its full sequence is Large ribosomal subunit protein uL2 (273 aa).

The tract at residues 221–263 (RGTAMNPVDHPHGGGEGRNFGKHPVSPWGLKTKGKKTRRNKRT) is disordered. A compositionally biased stretch (basic residues) spans 252 to 263 (TKGKKTRRNKRT).

The protein belongs to the universal ribosomal protein uL2 family. As to quaternary structure, part of the 50S ribosomal subunit. Forms a bridge to the 30S subunit in the 70S ribosome.

In terms of biological role, one of the primary rRNA binding proteins. Required for association of the 30S and 50S subunits to form the 70S ribosome, for tRNA binding and peptide bond formation. It has been suggested to have peptidyltransferase activity; this is somewhat controversial. Makes several contacts with the 16S rRNA in the 70S ribosome. This Buchnera aphidicola subsp. Cinara cedri (strain Cc) protein is Large ribosomal subunit protein uL2.